The sequence spans 119 residues: Small ribosomal subunit protein eS25 (119 aa).

Residues 1–42 (MPPKKDTKASAKQPQKTQKKKEGSGGGKAKKKKWSKGKVRDK) are disordered. Basic residues predominate over residues 28–37 (KAKKKKWSKG).

It belongs to the eukaryotic ribosomal protein eS25 family.

In Spodoptera frugiperda (Fall armyworm), this protein is Small ribosomal subunit protein eS25 (RpS25).